A 406-amino-acid chain; its full sequence is Odorant receptor 10a (406 aa).

Over 1-45 (MSEWLRFLKRDQQLDVYFFAVPRLSLDIMGYWPGKTGDTWPWRSL) the chain is Cytoplasmic. A helical membrane pass occupies residues 46 to 66 (IHFAILAIGVATELHAGMCFL). The Extracellular portion of the chain corresponds to 67-74 (DRQQITLA). A helical membrane pass occupies residues 75 to 95 (LETLCPAGTSAVTLLKMFLML). Topologically, residues 96–143 (RFRQDLSIMWNRLRGLLFDPNWERPEQRDIRLKHSAMAARINFWPLSA) are cytoplasmic. The helical transmembrane segment at 144-164 (GFFTCTTYNLKPILIAMILYL) threads the bilayer. Residues 165–189 (QNRYEDFVWFTPFNMTMPKVLLNYP) are Extracellular-facing. N178 is a glycosylation site (N-linked (GlcNAc...) asparagine). A helical transmembrane segment spans residues 190 to 210 (FFPLTYIFIAYTGYVTIFMFG). Over 211-281 (GCDGFYFEFC…LTRFFRDRYT (71 aa)) the chain is Cytoplasmic. A helical membrane pass occupies residues 282-302 (IITLAHFVSAAMVIGFSMVNL). Residues 303 to 308 (LTLGNN) lie on the Extracellular side of the membrane. The chain crosses the membrane as a helical span at residues 309–329 (GLGAMLYVAYTVAALSQLLVY). At 330 to 372 (CYGGTLVAESSTGLCRAMFSCPWQLFKPKQRRLVQLLILRSQR) the chain is on the cytoplasmic side. The helical transmembrane segment at 373 to 393 (PVSMAVPFFSPSLATFAAILQ) threads the bilayer. Topologically, residues 394 to 406 (TSGSIIALVKSFQ) are extracellular.

The protein belongs to the insect chemoreceptor superfamily. Heteromeric odorant receptor channel (TC 1.A.69) family. Or1a subfamily. Interacts with Orco. Complexes exist early in the endomembrane system in olfactory sensory neurons (OSNs), coupling these complexes to the conserved ciliary trafficking pathway. In terms of tissue distribution, expressed in olfactory sensory neurons in the antenna.

It is found in the cell membrane. Its function is as follows. Odorant receptor which mediates acceptance or avoidance behavior, depending on its substrates. The odorant receptor repertoire encodes a large collection of odor stimuli that vary widely in identity, intensity, and duration. May form a complex with Orco to form odorant-sensing units, providing sensitive and prolonged odorant signaling and calcium permeability. Involved in the behavioral responses to esters, and specifically to ethyl hexanoate, benzaldehyde, and acetophenone. This Drosophila melanogaster (Fruit fly) protein is Odorant receptor 10a (Or10a).